Here is a 458-residue protein sequence, read N- to C-terminus: ATP synthase subunit beta (458 aa).

148–155 provides a ligand contact to ATP; it reads GGAGVGKT.

This sequence belongs to the ATPase alpha/beta chains family. F-type ATPases have 2 components, CF(1) - the catalytic core - and CF(0) - the membrane proton channel. CF(1) has five subunits: alpha(3), beta(3), gamma(1), delta(1), epsilon(1). CF(0) has three main subunits: a(1), b(2) and c(9-12). The alpha and beta chains form an alternating ring which encloses part of the gamma chain. CF(1) is attached to CF(0) by a central stalk formed by the gamma and epsilon chains, while a peripheral stalk is formed by the delta and b chains.

Its subcellular location is the cell inner membrane. The catalysed reaction is ATP + H2O + 4 H(+)(in) = ADP + phosphate + 5 H(+)(out). Produces ATP from ADP in the presence of a proton gradient across the membrane. The catalytic sites are hosted primarily by the beta subunits. This chain is ATP synthase subunit beta, found in Francisella philomiragia subsp. philomiragia (strain ATCC 25017 / CCUG 19701 / FSC 153 / O#319-036).